The chain runs to 496 residues: Glycogen synthase (496 aa).

Residue K15 coordinates ADP-alpha-D-glucose.

It belongs to the glycosyltransferase 1 family. Bacterial/plant glycogen synthase subfamily.

It carries out the reaction [(1-&gt;4)-alpha-D-glucosyl](n) + ADP-alpha-D-glucose = [(1-&gt;4)-alpha-D-glucosyl](n+1) + ADP + H(+). It functions in the pathway glycan biosynthesis; glycogen biosynthesis. Its function is as follows. Synthesizes alpha-1,4-glucan chains using ADP-glucose. The chain is Glycogen synthase from Natranaerobius thermophilus (strain ATCC BAA-1301 / DSM 18059 / JW/NM-WN-LF).